A 372-amino-acid polypeptide reads, in one-letter code: Protein RecA (372 aa).

Position 77 to 84 (Gly77 to Thr84) interacts with ATP.

It belongs to the RecA family.

It is found in the cytoplasm. In terms of biological role, can catalyze the hydrolysis of ATP in the presence of single-stranded DNA, the ATP-dependent uptake of single-stranded DNA by duplex DNA, and the ATP-dependent hybridization of homologous single-stranded DNAs. It interacts with LexA causing its activation and leading to its autocatalytic cleavage. The polypeptide is Protein RecA (Corynebacterium diphtheriae (strain ATCC 700971 / NCTC 13129 / Biotype gravis)).